The primary structure comprises 559 residues: Palmitoyltransferase AKR1 (559 aa).

ANK repeat units follow at residues 8-38 (QGFN…PVDT), 42-71 (LGHT…RVDT), and 75-104 (EGFT…DIKA). The next 3 helical transmembrane spans lie at 148–168 (LMVL…FLFG), 192–212 (TAVF…YLLG), and 217–237 (LLWM…FFYG). The DHHC domain occupies 272 to 322 (HFCVSCIAQRPLRSKHCKFCNRCVAKFDHHCPWIYNCIGAKNHRAFLIFLA). Cysteine 302 (S-palmitoyl cysteine intermediate) is an active-site residue. A run of 2 helical transmembrane segments spans residues 316-336 (AFLI…YLSF) and 373-393 (LAFW…VQLY).

This sequence belongs to the DHHC palmitoyltransferase family. AKR/ZDHHC17 subfamily.

Its subcellular location is the early endosome membrane. The protein resides in the golgi apparatus membrane. It carries out the reaction L-cysteinyl-[protein] + hexadecanoyl-CoA = S-hexadecanoyl-L-cysteinyl-[protein] + CoA. Its function is as follows. Palmitoyltransferase specific for casein kinase 1. The protein is Palmitoyltransferase AKR1 of Mortierella alpina (Oleaginous fungus).